Consider the following 379-residue polypeptide: Type II methyltransferase M.SsoII (379 aa).

The region spanning 9–66 is the HTH cro/C1-type domain; the sequence is IKEKRERLHMTQKEFADALGLSKYGDRTIRRWERGETKPTGAELKAVIDFPDTPPYPN. Residues 72–379 enclose the SAM-dependent MTase C5-type domain; sequence YRMIDLFAGI…AEKIISTLDS (308 aa). C142 is a catalytic residue.

Belongs to the class I-like SAM-binding methyltransferase superfamily. C5-methyltransferase family.

The catalysed reaction is a 2'-deoxycytidine in DNA + S-adenosyl-L-methionine = a 5-methyl-2'-deoxycytidine in DNA + S-adenosyl-L-homocysteine + H(+). Its function is as follows. A methylase that recognizes the double-stranded sequence 5'-CCNGG-3', methylates C-2 on both strands, and protects the DNA from cleavage by the SsoII endonuclease. In Shigella sonnei, this protein is Type II methyltransferase M.SsoII (ssoIIM).